We begin with the raw amino-acid sequence, 20 residues long: Cytochrome c oxidase subunit 7B-liver, mitochondrial (20 aa).

It belongs to the cytochrome c oxidase VIIb family. In terms of assembly, component of the cytochrome c oxidase (complex IV, CIV), a multisubunit enzyme composed of 14 subunits. The complex is composed of a catalytic core of 3 subunits MT-CO1, MT-CO2 and MT-CO3, encoded in the mitochondrial DNA, and 11 supernumerary subunits COX4I, COX5A, COX5B, COX6A, COX6B, COX6C, COX7A, COX7B, COX7C, COX8 and NDUFA4, which are encoded in the nuclear genome. The complex exists as a monomer or a dimer and forms supercomplexes (SCs) in the inner mitochondrial membrane with NADH-ubiquinone oxidoreductase (complex I, CI) and ubiquinol-cytochrome c oxidoreductase (cytochrome b-c1 complex, complex III, CIII), resulting in different assemblies (supercomplex SCI(1)III(2)IV(1) and megacomplex MCI(2)III(2)IV(2)).

It localises to the mitochondrion inner membrane. The enzyme catalyses 4 Fe(II)-[cytochrome c] + O2 + 8 H(+)(in) = 4 Fe(III)-[cytochrome c] + 2 H2O + 4 H(+)(out). Its pathway is energy metabolism; oxidative phosphorylation. Functionally, component of the cytochrome c oxidase, the last enzyme in the mitochondrial electron transport chain which drives oxidative phosphorylation. The respiratory chain contains 3 multisubunit complexes succinate dehydrogenase (complex II, CII), ubiquinol-cytochrome c oxidoreductase (cytochrome b-c1 complex, complex III, CIII) and cytochrome c oxidase (complex IV, CIV), that cooperate to transfer electrons derived from NADH and succinate to molecular oxygen, creating an electrochemical gradient over the inner membrane that drives transmembrane transport and the ATP synthase. Cytochrome c oxidase is the component of the respiratory chain that catalyzes the reduction of oxygen to water. Electrons originating from reduced cytochrome c in the intermembrane space (IMS) are transferred via the dinuclear copper A center (CU(A)) of subunit 2 and heme A of subunit 1 to the active site in subunit 1, a binuclear center (BNC) formed by heme A3 and copper B (CU(B)). The BNC reduces molecular oxygen to 2 water molecules using 4 electrons from cytochrome c in the IMS and 4 protons from the mitochondrial matrix. This chain is Cytochrome c oxidase subunit 7B-liver, mitochondrial, found in Thunnus obesus (Bigeye tuna).